Here is a 643-residue protein sequence, read N- to C-terminus: MIHITLPDGSQREYPGPVTVAEVAASIGTGLAKAALAGKVGTGDDAKVVDTSFVINKDMPLSIVTAKDADGLDVIRHSTAHLLAYAVKDLFPDAQVTIGPVIENGFYYDFSYKRPFTPEDLVAIEKRMAELAAKDEPVVRRVLPRDEAVAYFKGIGENYKAEIIASIPSNEDVSLYREGSFEDLCRGPHVPSTGKLKFFKLMKVAGAYWRGDHRNEMLQRVYGTAWASKDDLQQYLHMLEEAEKRDHRKLGRELDLFHIDEHSPGTVFWHPKGWSLWQEVEQYMRRVYRDNGYQEVKGPQILDKTLWEKTGHWDKYRENMFTTESEKRDYALKPMNCPGHILIFKQGIKSYRDLPLRYGEFGQCHRNEPTGGLHGIMRVRGFTQDDGHVFCTEDQIQPEVLAFTTLLQKVYADFGFSDIIYKVATRPEARIGSDESWDKAEAALINSLEASGCEYVISPGDGAFYGPKIEYTLKDAIGRQWQCGTIQVDFSMPERLDAEYVGEDGDRHRPVMLHRAIVGSLERFIGILIEQHAGAMPTWLAPVQAAVLNITDAQADYVREVAQKLQKAFPNQGLRVATDLRNEKITYKIREHSLQKLPYILVAGDKEKAAGAVAVRARGNKDLGVMSVDAFIELVAKDIAAKA.

One can recognise a TGS domain in the interval 1–65 (MIHITLPDGS…NKDMPLSIVT (65 aa)). Positions 246–537 (DHRKLGRELD…LIEQHAGAMP (292 aa)) are catalytic. Cysteine 337, histidine 388, and histidine 514 together coordinate Zn(2+).

This sequence belongs to the class-II aminoacyl-tRNA synthetase family. As to quaternary structure, homodimer. Requires Zn(2+) as cofactor.

It is found in the cytoplasm. The catalysed reaction is tRNA(Thr) + L-threonine + ATP = L-threonyl-tRNA(Thr) + AMP + diphosphate + H(+). In terms of biological role, catalyzes the attachment of threonine to tRNA(Thr) in a two-step reaction: L-threonine is first activated by ATP to form Thr-AMP and then transferred to the acceptor end of tRNA(Thr). Also edits incorrectly charged L-seryl-tRNA(Thr). This Delftia acidovorans (strain DSM 14801 / SPH-1) protein is Threonine--tRNA ligase.